A 101-amino-acid chain; its full sequence is Gamma-secretase subunit PEN-2 (101 aa).

The Cytoplasmic portion of the chain corresponds to 1–17 (MNLERVSNEEKLNLCRK). Residues 18-36 (YYLGGFAFLPFLWLVNIFW) constitute an intramembrane region (helical). Topologically, residues 37 to 57 (FFREAFIVPAYTEQSQIKGYV) are cytoplasmic. The helical transmembrane segment at 58–78 (WRSAVGFFLWVIVLSTWITIF) threads the bilayer. Topologically, residues 79–101 (QIYRPRWGALGDYLSFTIPLGTP) are lumenal.

It belongs to the PEN-2 family. As to quaternary structure, the functional gamma-secretase complex is composed of at least four polypeptides: a presenilin homodimer (PSEN1 or PSEN2), nicastrin (NCSTN), APH1 (APH1A or APH1B) and PSENEN.

It is found in the endoplasmic reticulum membrane. Its subcellular location is the golgi apparatus. The protein resides in the golgi stack membrane. The protein localises to the cell membrane. It localises to the membrane. Functionally, essential subunit of the gamma-secretase complex, an endoprotease complex that catalyzes the intramembrane cleavage of integral membrane proteins such as Notch receptors and APP (amyloid-beta precursor protein). The gamma-secretase complex plays a role in Notch and Wnt signaling cascades and regulation of downstream processes via its role in processing key regulatory proteins, and by regulating cytosolic CTNNB1 levels. PSENEN modulates both endoproteolysis of presenilin and gamma-secretase activity. This Bos taurus (Bovine) protein is Gamma-secretase subunit PEN-2 (PSENEN).